Here is a 257-residue protein sequence, read N- to C-terminus: Transmembrane protein C257L (257 aa).

The next 2 membrane-spanning stretches (helical) occupy residues Leu-123 to Leu-143 and Ile-163 to Val-183.

This sequence belongs to the asfivirus C257R family.

The protein localises to the host membrane. Its subcellular location is the virion. The protein is Transmembrane protein C257L of African swine fever virus (isolate Pig/Kenya/KEN-50/1950) (ASFV).